The following is a 685-amino-acid chain: Putative pentatricopeptide repeat-containing protein At3g08820 (685 aa).

12 PPR repeats span residues 75 to 109, 110 to 144, 145 to 175, 176 to 210, 211 to 245, 246 to 276, 277 to 311, 312 to 346, 347 to 381, 383 to 412, 413 to 443, and 449 to 479; these read NIFLYNSLINGFVNNHLFHETLDLFLSIRKHGLYL, HGFTFPLVLKACTRASSRKLGIDLHSLVVKCGFNH, DVAAMTSLLSIYSGSGRLNDAHKLFDEIPDR, SVVTWTALFSGYTTSGRHREAIDLFKKMVEMGVKP, DSYFIVQVLSACVHVGDLDSGEWIVKYMEEMEMQK, NSFVRTTLVNLYAKCGKMEKARSVFDSMVEK, DIVTWSTMIQGYASNSFPKEGIELFLQMLQENLKP, DQFSIVGFLSSCASLGALDLGEWGISLIDRHEFLT, NLFMANALIDMYAKCGAMARGFEVFKEMKEKDIVI, NAAISGLAKNGHVKLSFAVFGQTEKLGISP, DGSTFLGLLCGCVHAGLIQDGLRFFNAISCV, and TVEHYGCMVDLWGRAGMLDDAYRLICDMPMR. Positions 484-559 are type E motif; that stretch reads VWGALLSGCR…IPGYSWIELE (76 aa). The type E(+) motif stretch occupies residues 560–590; the sequence is GKVHEFLADDKSHPLSDKIYAKLEDLGNEMR. The segment at 591–685 is type DYW motif; that stretch reads LMGFVPTTEF…NGSCSCNDYW (95 aa).

This sequence belongs to the PPR family. PCMP-H subfamily.

The protein is Putative pentatricopeptide repeat-containing protein At3g08820 (PCMP-H84) of Arabidopsis thaliana (Mouse-ear cress).